We begin with the raw amino-acid sequence, 156 residues long: ATP synthase subunit b (156 aa).

Residues 11–31 traverse the membrane as a helical segment; that stretch reads AIAFILFVWFCMKYVWPPLMA.

The protein belongs to the ATPase B chain family. F-type ATPases have 2 components, F(1) - the catalytic core - and F(0) - the membrane proton channel. F(1) has five subunits: alpha(3), beta(3), gamma(1), delta(1), epsilon(1). F(0) has three main subunits: a(1), b(2) and c(10-14). The alpha and beta chains form an alternating ring which encloses part of the gamma chain. F(1) is attached to F(0) by a central stalk formed by the gamma and epsilon chains, while a peripheral stalk is formed by the delta and b chains.

It is found in the cell inner membrane. F(1)F(0) ATP synthase produces ATP from ADP in the presence of a proton or sodium gradient. F-type ATPases consist of two structural domains, F(1) containing the extramembraneous catalytic core and F(0) containing the membrane proton channel, linked together by a central stalk and a peripheral stalk. During catalysis, ATP synthesis in the catalytic domain of F(1) is coupled via a rotary mechanism of the central stalk subunits to proton translocation. In terms of biological role, component of the F(0) channel, it forms part of the peripheral stalk, linking F(1) to F(0). The polypeptide is ATP synthase subunit b (Enterobacter sp. (strain 638)).